The chain runs to 548 residues: Sesquiterpene synthase 9 (548 aa).

Mg(2+) contacts are provided by Asp-300, Asp-304, and Glu-453. The DDXXD motif signature appears at 300–304; it reads DDTFD.

The protein belongs to the terpene synthase family. Tpsa subfamily. Requires Mg(2+) as cofactor. Mn(2+) serves as cofactor. Mostly expressed in stem and trichomes, to a lower extent in roots, leaves and flowers and, at low levels, in fruits.

The protein localises to the cytoplasm. The catalysed reaction is (2E,6E)-farnesyl diphosphate = germacrene C + diphosphate. It carries out the reaction (2E)-geranyl diphosphate = terpinolene + diphosphate. The enzyme catalyses (2E)-geranyl diphosphate = limonene + diphosphate. It catalyses the reaction (2E)-geranyl diphosphate = beta-myrcene + diphosphate. The catalysed reaction is (2Z,6Z)-farnesyl diphosphate = germacrene C + diphosphate. Its pathway is secondary metabolite biosynthesis; terpenoid biosynthesis. Its function is as follows. Involved in the biosynthesis of germacrene C, one of the most abundant sesquiterpene in the leaf oil of tomato. Produces mainly germacrene C, but also smaller amounts of germacrene A, B and D when used with farnesyl diphosphate (FPP) as substrate; able to use both (2E,6E)-farnesyl diphosphate ((EE)-FPP) and (2Z,6Z)-farnesyl diphosphate ((ZZ)-FPP). No or low activity with geranylgeranyl diphosphate (GGPP). Can act with a low efficiency as a monoterpene synthase with geranyl diphosphate (GPP) as substrate, thus producing beta-myrcene, limonene and terpinolene. The protein is Sesquiterpene synthase 9 of Solanum lycopersicum (Tomato).